The chain runs to 179 residues: Large ribosomal subunit protein uL5 (179 aa).

Belongs to the universal ribosomal protein uL5 family. In terms of assembly, part of the 50S ribosomal subunit; part of the 5S rRNA/L5/L18/L25 subcomplex. Contacts the 5S rRNA and the P site tRNA. Forms a bridge to the 30S subunit in the 70S ribosome.

This is one of the proteins that bind and probably mediate the attachment of the 5S RNA into the large ribosomal subunit, where it forms part of the central protuberance. In the 70S ribosome it contacts protein S13 of the 30S subunit (bridge B1b), connecting the 2 subunits; this bridge is implicated in subunit movement. Contacts the P site tRNA; the 5S rRNA and some of its associated proteins might help stabilize positioning of ribosome-bound tRNAs. The sequence is that of Large ribosomal subunit protein uL5 from Clostridium beijerinckii (strain ATCC 51743 / NCIMB 8052) (Clostridium acetobutylicum).